A 156-amino-acid chain; its full sequence is ATP synthase subunit b (156 aa).

Residues Ala-11–Ala-31 form a helical membrane-spanning segment.

The protein belongs to the ATPase B chain family. F-type ATPases have 2 components, F(1) - the catalytic core - and F(0) - the membrane proton channel. F(1) has five subunits: alpha(3), beta(3), gamma(1), delta(1), epsilon(1). F(0) has three main subunits: a(1), b(2) and c(10-14). The alpha and beta chains form an alternating ring which encloses part of the gamma chain. F(1) is attached to F(0) by a central stalk formed by the gamma and epsilon chains, while a peripheral stalk is formed by the delta and b chains.

It is found in the cell inner membrane. In terms of biological role, f(1)F(0) ATP synthase produces ATP from ADP in the presence of a proton or sodium gradient. F-type ATPases consist of two structural domains, F(1) containing the extramembraneous catalytic core and F(0) containing the membrane proton channel, linked together by a central stalk and a peripheral stalk. During catalysis, ATP synthesis in the catalytic domain of F(1) is coupled via a rotary mechanism of the central stalk subunits to proton translocation. Functionally, component of the F(0) channel, it forms part of the peripheral stalk, linking F(1) to F(0). The sequence is that of ATP synthase subunit b from Citrobacter koseri (strain ATCC BAA-895 / CDC 4225-83 / SGSC4696).